Consider the following 227-residue polypeptide: Tegument protein ORF55 (227 aa).

The S-palmitoyl cysteine; by host moiety is linked to residue Cys-11. A disordered region spans residues 183–227 (VTRQPEATLPKPPTEDPSVSAMHSSIPPRPSSTLEETTESAIGST). Positions 213 to 227 (SSTLEETTESAIGST) are enriched in polar residues.

The protein belongs to the herpesviridae UL51 family. In terms of assembly, oligomerizes. Interacts with ORF42; this interaction mediates ORF42 incorporation to virions. Interacts with vBCL2. Phosphorylated. In terms of processing, palmitoylation is necessary for Golgi localization.

It localises to the virion tegument. It is found in the host cytoplasm. The protein resides in the host Golgi apparatus. Plays several roles during the time course of infection, including egress of virus particles from the perinuclear space and secondary envelopment of cytoplasmic capsids that bud into specific trans-Golgi network (TGN)-derived membranes. This Homo sapiens (Human) protein is Tegument protein ORF55 (ORF55).